The following is a 368-amino-acid chain: Acetyl-coenzyme A carboxylase carboxyl transferase subunit alpha (368 aa).

The CoA carboxyltransferase C-terminal domain maps to 44-294; that stretch reads EIDNKLQEIY…RKSIEKNLNE (251 aa).

It belongs to the AccA family. In terms of assembly, acetyl-CoA carboxylase is a heterohexamer composed of biotin carboxyl carrier protein (AccB), biotin carboxylase (AccC) and two subunits each of ACCase subunit alpha (AccA) and ACCase subunit beta (AccD).

The protein resides in the cytoplasm. It catalyses the reaction N(6)-carboxybiotinyl-L-lysyl-[protein] + acetyl-CoA = N(6)-biotinyl-L-lysyl-[protein] + malonyl-CoA. Its pathway is lipid metabolism; malonyl-CoA biosynthesis; malonyl-CoA from acetyl-CoA: step 1/1. In terms of biological role, component of the acetyl coenzyme A carboxylase (ACC) complex. First, biotin carboxylase catalyzes the carboxylation of biotin on its carrier protein (BCCP) and then the CO(2) group is transferred by the carboxyltransferase to acetyl-CoA to form malonyl-CoA. This chain is Acetyl-coenzyme A carboxylase carboxyl transferase subunit alpha, found in Pelagibacter ubique (strain HTCC1062).